Reading from the N-terminus, the 459-residue chain is MSAGNIVEIIGAVVDVEFPRDAVPNVYDALRVEDSGLTLEVQQQLGDGVVRTIAMGSTDGMRRGVTVANTGAPISVPVGKGTLGRVMDVLGNPVDNAGDVQTEERWSIHRPAPSFDEQAGSTELLETGIKVIDLLCPFAKGGKVGLFGGAGVGKTVNMMELIRNIAIEHSGYSVFAGVGERTREGNDFYHEMKDSNVLDKVALVYGQMNEPPGNRLRVALTGLTMAEFFRDEGRDVLMFIDNIYRYTLAGTEVSALLGRMPSAVGYQPTLAEEMGVLQERITSTKKGSITSIQAVYVPADDLTDPSPATTFAHLDATVVLSRQIAELGIYPAVDPLDSTSRQLDPQVIGNEHYDTARAVQNTLQRYKELKDIIAILGMDELSEDDKLIVARARKIQRFLSQPFFVAEVFTGAPGKYVSLKDTIRGFQAIVAGEYDHLPEQAFYMVGTIDEAVEKAGKLK.

148–155 (GGAGVGKT) serves as a coordination point for ATP.

Belongs to the ATPase alpha/beta chains family. In terms of assembly, F-type ATPases have 2 components, CF(1) - the catalytic core - and CF(0) - the membrane proton channel. CF(1) has five subunits: alpha(3), beta(3), gamma(1), delta(1), epsilon(1). CF(0) has three main subunits: a(1), b(2) and c(9-12). The alpha and beta chains form an alternating ring which encloses part of the gamma chain. CF(1) is attached to CF(0) by a central stalk formed by the gamma and epsilon chains, while a peripheral stalk is formed by the delta and b chains.

The protein resides in the cell inner membrane. The catalysed reaction is ATP + H2O + 4 H(+)(in) = ADP + phosphate + 5 H(+)(out). In terms of biological role, produces ATP from ADP in the presence of a proton gradient across the membrane. The catalytic sites are hosted primarily by the beta subunits. In Thioalkalivibrio sulfidiphilus (strain HL-EbGR7), this protein is ATP synthase subunit beta.